Here is a 593-residue protein sequence, read N- to C-terminus: Cryptochrome-2 (593 aa).

The Photolyase/cryptochrome alpha/beta domain maps to 22–151 (ASSVHWFRKG…EVVTENSHTL (130 aa)). Lysine 30 is covalently cross-linked (Glycyl lysine isopeptide (Lys-Gly) (interchain with G-Cter in ubiquitin)). Serine 90 is subject to Phosphoserine. Glycyl lysine isopeptide (Lys-Gly) (interchain with G-Cter in ubiquitin) cross-links involve residues lysine 126 and lysine 242. Serine 266 is subject to Phosphoserine; by MAPK. Serine 271 is an FAD binding site. Residue serine 299 is modified to Phosphoserine. Glutamine 308 is an FAD binding site. Residue lysine 348 forms a Glycyl lysine isopeptide (Lys-Gly) (interchain with G-Cter in ubiquitin) linkage. FAD-binding positions include histidine 374 and 406–408 (DAD). A required for inhibition of CLOCK-BMAL1-mediated transcription region spans residues 390 to 489 (WVSWESGVRV…IIGVDYPRPI (100 aa)). Glycyl lysine isopeptide (Lys-Gly) (interchain with G-Cter in ubiquitin) cross-links involve residues lysine 475 and lysine 504. Residues 532–593 (PVAEPSSSQA…PTPELPSKDA (62 aa)) are disordered. Over residues 537-548 (SSSQAGSMSSAG) the composition is skewed to low complexity. A Phosphoserine; by GSK3-beta modification is found at serine 554. At serine 558 the chain carries Phosphoserine; by DYRK1A and MAPK.

It belongs to the DNA photolyase class-1 family. In terms of assembly, component of the circadian core oscillator, which includes the CRY proteins, CLOCK or NPAS2, BMAL1 or BMAL2, CSNK1D and/or CSNK1E, TIMELESS, and the PER proteins. Interacts with TIMELESS. Interacts directly with PER1, PER2 and PER3; interaction with PER2 inhibits its ubiquitination and vice versa. Interacts with CLOCK-BMAL1. Interacts with CLOCK. Interacts with BMAL1. Interacts with NFIL3. Interacts with FBXL3. Interacts with FBXL21. FBXL3, PER2 and the cofactor FAD compete for overlapping binding sites. FBXL3 cannot bind CRY2 that interacts already with PER2 or that contains bound FAD. Interacts with PPP5C (via TPR repeats); the interaction down-regulates the PPP5C phosphatase activity on CSNK1E. Interacts with nuclear receptors AR and NR3C1/GR; the interaction is ligand dependent. Interacts with PRKDC and CIART. Interacts with ISCA1 (in vitro). Interacts with DDB1, USP7 and TARDBP. Interacts with HNF4A. Interacts with PPARA. Interacts with PPARD (via domain NR LBD) and NR1I2 (via domain NR LBD) in a ligand-dependent manner. Interacts with PPARG, NR1I3 and VDR in a ligand-dependent manner. FAD serves as cofactor. (6R)-5,10-methylene-5,6,7,8-tetrahydrofolate is required as a cofactor. In terms of processing, phosphorylation on Ser-266 by MAPK is important for the inhibition of CLOCK-BMAL1-mediated transcriptional activity. Phosphorylation by CSKNE requires interaction with PER1 or PER2. Phosphorylated in a circadian manner at Ser-554 and Ser-558 in the suprachiasmatic nucleus (SCN) and liver. Phosphorylation at Ser-558 by DYRK1A promotes subsequent phosphorylation at Ser-554 by GSK3-beta: the two-step phosphorylation at the neighboring Ser residues leads to its proteasomal degradation. Post-translationally, ubiquitinated by the SCF(FBXL3) and SCF(FBXL21) complexes, regulating the balance between degradation and stabilization. The SCF(FBXL3) complex is mainly nuclear and mediates ubiquitination and subsequent degradation of CRY2. In contrast, cytoplasmic SCF(FBXL21) complex-mediated ubiquitination leads to stabilize CRY2 and counteract the activity of the SCF(FBXL3) complex. The SCF(FBXL3) and SCF(FBXL21) complexes probably mediate ubiquitination at different Lys residues. The SCF(FBXL3) complex recognizes and binds CRY2 phosphorylated at Ser-554 and Ser-558. Ubiquitination may be inhibited by PER2. Deubiquitinated by USP7. In terms of tissue distribution, expressed in all tissues examined including fetal brain, fibroblasts, heart, brain, placenta, lung, liver, skeletal muscle, kidney, pancreas, spleen, thymus, prostate, testis, ovary, small intestine, colon and leukocytes. Highest levels in heart and skeletal muscle.

The protein localises to the cytoplasm. Its subcellular location is the nucleus. Its activity is regulated as follows. KL001 (N-[3-(9H-carbazol-9-yl)-2-hydroxypropyl]-N-(2-furanylmethyl)-methanesulfonamide) binds to CRY1 and stabilizes it by inhibiting FBXL3- and ubiquitin-dependent degradation of CRY1 resulting in lengthening of the circadian periods. Transcriptional repressor which forms a core component of the circadian clock. The circadian clock, an internal time-keeping system, regulates various physiological processes through the generation of approximately 24 hour circadian rhythms in gene expression, which are translated into rhythms in metabolism and behavior. It is derived from the Latin roots 'circa' (about) and 'diem' (day) and acts as an important regulator of a wide array of physiological functions including metabolism, sleep, body temperature, blood pressure, endocrine, immune, cardiovascular, and renal function. Consists of two major components: the central clock, residing in the suprachiasmatic nucleus (SCN) of the brain, and the peripheral clocks that are present in nearly every tissue and organ system. Both the central and peripheral clocks can be reset by environmental cues, also known as Zeitgebers (German for 'timegivers'). The predominant Zeitgeber for the central clock is light, which is sensed by retina and signals directly to the SCN. The central clock entrains the peripheral clocks through neuronal and hormonal signals, body temperature and feeding-related cues, aligning all clocks with the external light/dark cycle. Circadian rhythms allow an organism to achieve temporal homeostasis with its environment at the molecular level by regulating gene expression to create a peak of protein expression once every 24 hours to control when a particular physiological process is most active with respect to the solar day. Transcription and translation of core clock components (CLOCK, NPAS2, BMAL1, BMAL2, PER1, PER2, PER3, CRY1 and CRY2) plays a critical role in rhythm generation, whereas delays imposed by post-translational modifications (PTMs) are important for determining the period (tau) of the rhythms (tau refers to the period of a rhythm and is the length, in time, of one complete cycle). A diurnal rhythm is synchronized with the day/night cycle, while the ultradian and infradian rhythms have a period shorter and longer than 24 hours, respectively. Disruptions in the circadian rhythms contribute to the pathology of cardiovascular diseases, cancer, metabolic syndromes and aging. A transcription/translation feedback loop (TTFL) forms the core of the molecular circadian clock mechanism. Transcription factors, CLOCK or NPAS2 and BMAL1 or BMAL2, form the positive limb of the feedback loop, act in the form of a heterodimer and activate the transcription of core clock genes and clock-controlled genes (involved in key metabolic processes), harboring E-box elements (5'-CACGTG-3') within their promoters. The core clock genes: PER1/2/3 and CRY1/2 which are transcriptional repressors form the negative limb of the feedback loop and interact with the CLOCK|NPAS2-BMAL1|BMAL2 heterodimer inhibiting its activity and thereby negatively regulating their own expression. This heterodimer also activates nuclear receptors NR1D1/2 and RORA/B/G, which form a second feedback loop and which activate and repress BMAL1 transcription, respectively. CRY1 and CRY2 have redundant functions but also differential and selective contributions at least in defining the pace of the SCN circadian clock and its circadian transcriptional outputs. Less potent transcriptional repressor in cerebellum and liver than CRY1, though less effective in lengthening the period of the SCN oscillator. Seems to play a critical role in tuning SCN circadian period by opposing the action of CRY1. With CRY1, dispensable for circadian rhythm generation but necessary for the development of intercellular networks for rhythm synchrony. May mediate circadian regulation of cAMP signaling and gluconeogenesis by blocking glucagon-mediated increases in intracellular cAMP concentrations and in CREB1 phosphorylation. Besides its role in the maintenance of the circadian clock, is also involved in the regulation of other processes. Plays a key role in glucose and lipid metabolism modulation, in part, through the transcriptional regulation of genes involved in these pathways, such as LEP or ACSL4. Represses glucocorticoid receptor NR3C1/GR-induced transcriptional activity by binding to glucocorticoid response elements (GREs). Represses the CLOCK-BMAL1 induced transcription of BHLHE40/DEC1. Represses the CLOCK-BMAL1 induced transcription of NAMPT. Represses PPARD and its target genes in the skeletal muscle and limits exercise capacity. Represses the transcriptional activity of NR1I2. In Homo sapiens (Human), this protein is Cryptochrome-2 (CRY2).